We begin with the raw amino-acid sequence, 291 residues long: tRNA-uridine aminocarboxypropyltransferase 1 (291 aa).

Residues 158 to 181 are disordered; it reads KNSAYEPSSKRPKFSPENDKNTYE. Residues 171 to 181 are compositionally biased toward basic and acidic residues; the sequence is FSPENDKNTYE. A DXTW motif is present at residues 199–202; sequence DSTW.

This sequence belongs to the TDD superfamily. DTWD1 family.

It localises to the nucleus. It carries out the reaction a uridine in tRNA + S-adenosyl-L-methionine = a 3-[(3S)-3-amino-3-carboxypropyl]uridine in tRNA + S-methyl-5'-thioadenosine + H(+). Functionally, catalyzes the formation of 3-(3-amino-3-carboxypropyl)uridine (acp3U) at position 20 in the D-loop of several cytoplasmic tRNAs (acp3U(20)). This chain is tRNA-uridine aminocarboxypropyltransferase 1, found in Xenopus laevis (African clawed frog).